Consider the following 728-residue polypeptide: MIPELIKENLFLEDGRALSIETGELARKANGSAVVRMGNTSLLATVVISKESKEDFKFIPLTIDYREKYSAGGKIPGGYIKREGRPYDEEILTMRLVDRLLRPLFKDNYYNEIQIMISLLSYDINVLPDGLAGLVASTAVSISEISFQGPVSTVRIIRINDAFIINPGIEEIKKSDFYLDLDLDLDLIVGGTNNYIILVEGEMREISEIEMMEAIVKAHKYIQLQIEAQISLITKNKKFIKKKLYKIELYNYYYKYINFNLNVFYIKEKIKFISYEEIDYIYKSCLFKQKRSNKIYNILKKIKFHFYNESIVINNLEIDIIFDEIKKEIIKNILFKENIRLDGRSLDDIRNICSQVDCLPGVHGSAIFTRGETQALSTVTLGSSLDVNKIDNAIMRAKQRFYLHYNFPPFSTGEIKLLKGVSRREIGHGNLAQRALKNIIPTTYTIRVVSDVLESNGSSSMATVCASTLALMDSGIIVKRPVSGISMGLIMNYLTGEAIILSDLLGDEDYIGDMDFKITGTEYGMTACQMDIKISGITYDVLSYTIFKAKKGLLFIIKKMLTTLSCPRKSLNITATKIYTFYIPKKLIGAVIGSGGKRIQEIQVSTETNIKIKEKNYLGVIEILGKNETKLKIAILKIKNITFVPKVGTIYKAKVKNIKKFGVFVKISKYLEGLLHIYEISWLTKVESFIRKGDIISVKYLGKNNKFRKIKLSHKMIFSRYYLNKNLK.

2 residues coordinate Mg(2+): aspartate 509 and aspartate 515. Residues 576 to 638 enclose the KH domain; it reads TKIYTFYIPK…TKLKIAILKI (63 aa). An S1 motif domain is found at 648 to 715; the sequence is GTIYKAKVKN…KFRKIKLSHK (68 aa).

Belongs to the polyribonucleotide nucleotidyltransferase family. The cofactor is Mg(2+).

It localises to the cytoplasm. It catalyses the reaction RNA(n+1) + phosphate = RNA(n) + a ribonucleoside 5'-diphosphate. In terms of biological role, involved in mRNA degradation. Catalyzes the phosphorolysis of single-stranded polyribonucleotides processively in the 3'- to 5'-direction. This is Polyribonucleotide nucleotidyltransferase from Karelsulcia muelleri (strain GWSS) (Sulcia muelleri).